The following is a 215-amino-acid chain: Pyrrolidone-carboxylate peptidase (215 aa).

Active-site residues include Glu-81, Cys-144, and His-168.

The protein belongs to the peptidase C15 family. Homotetramer.

It is found in the cytoplasm. It catalyses the reaction Release of an N-terminal pyroglutamyl group from a polypeptide, the second amino acid generally not being Pro.. Functionally, removes 5-oxoproline from various penultimate amino acid residues except L-proline. The protein is Pyrrolidone-carboxylate peptidase (pcp) of Bacillus subtilis (strain 168).